The primary structure comprises 842 residues: MVAFTIEQIRDLMDKVANVRNMSVIAHVDHGKSTLTDSLVQRAGIISAGKAGEARFMDTRKDEQERGITIKSTAISLYASMDDDDVKEIKQKTDGNSFLINLIDSPGHVDFSSEVTAALRVTDGALVVVDTVEGVCVQTETVLRQALGERIKPVLVVNKVDRALLELQVSKEDLYQTFARTVESVNVIISTYVDPALGDAQVYPDKGTVAFGSGLHGWAFTVRQFALRYSKKFGVDRAKMMERLWGDSFFNPKTKKWTNKDKDADGKPLERAFNMFVLDPIFRLFAAIMNFKKDEIPTLLEKLEINLKNEEKELEGKALLKVVMRKFLPAADALLEMIVLHLPSPVTAQAYRAETLYEGPSDDEFCTAIRNCDPKADLMLYVSKMVPTSDKGRFYAFGRVFAGTVKAGQKIRIQGPNYTPGKKEDLFLKSIQRTVLMMGRNTEAIDDCPAGNIVGLVGVDQFLLKSGTITTNEAAHNMKVMKFSVSPVVEVAVEVKNANDLPKLVEGLKRLSKSDPCVKTYMSESGEHIVAGTGELHLEICLSDLQNDHAGIPLRISDPVVAYRETIQAESSMVALSKSPNKHNRIYVKAQPIDEEVSLDIENGIINPRDDFKARARILADKHGWDVAEARKIWCFGPDGNGPNLVVDQTKAVQYLNEIKDSVVAAFQWATKEGPIFGENVRSVRVNILDVTLHADAIHRGGGQIIPTMRRVTYASMLLAEPAIQEPVFLVEIQCPENAIGGIYSVLNKKRGQVVSEEQRPGTPLFTVKAYLPVNESFGFSGDLRQATGGQAFPQLVFDHWAVLSGDVTDPTSKPGIIAKAKRERQGLKPEVPGYEEYYDKL.

Positions 17 to 346 constitute a tr-type G domain; sequence ANVRNMSVIA…MIVLHLPSPV (330 aa). Residues 26-33, 158-161, and 213-215 each bind GTP; these read AHVDHGKS, NKVD, and SGL. His699 is modified (diphthamide).

Belongs to the TRAFAC class translation factor GTPase superfamily. Classic translation factor GTPase family. EF-G/EF-2 subfamily.

It localises to the cytoplasm. It carries out the reaction GTP + H2O = GDP + phosphate + H(+). It functions in the pathway protein biosynthesis; polypeptide chain elongation. Catalyzes the GTP-dependent ribosomal translocation step during translation elongation. During this step, the ribosome changes from the pre-translocational (PRE) to the post-translocational (POST) state as the newly formed A-site-bound peptidyl-tRNA and P-site-bound deacylated tRNA move to the P and E sites, respectively. Catalyzes the coordinated movement of the two tRNA molecules, the mRNA and conformational changes in the ribosome. This is Elongation factor 2 (EFT2) from Meyerozyma guilliermondii (strain ATCC 6260 / CBS 566 / DSM 6381 / JCM 1539 / NBRC 10279 / NRRL Y-324) (Yeast).